We begin with the raw amino-acid sequence, 128 residues long: SH2 domain-containing protein 1A (128 aa).

Residues valine 6–valine 102 enclose the SH2 domain. The tract at residues glutamate 67–glutamine 92 is interaction with FYN SH3 domain. Lysine 89 carries the N6-acetyllysine modification. The interval serine 106 to proline 128 is disordered. Residues isoleucine 117 to proline 128 are compositionally biased toward basic and acidic residues.

As to quaternary structure, interacts with CD84, CD244, LY9, SLAMF1 and FYN. Interacts with NTRK1, NTRK2 and NTRK3.

The protein resides in the cytoplasm. In terms of biological role, cytoplasmic adapter regulating receptors of the signaling lymphocytic activation molecule (SLAM) family such as SLAMF1, CD244, LY9, CD84, SLAMF6 and SLAMF7. In SLAM signaling seems to cooperate with SH2D1B/EAT-2. Initially it has been proposed that association with SLAMF1 prevents SLAMF1 binding to inhibitory effectors including INPP5D/SHIP1 and PTPN11/SHP-2. However, by simultaneous interactions, recruits FYN which subsequently phosphorylates and activates SLAMF1. Positively regulates CD244/2B4- and CD84-mediated natural killer (NK) cell functions. Can also promote CD48-, SLAMF6 -, LY9-, and SLAMF7-mediated NK cell activation. In the context of NK cell-mediated cytotoxicity enhances conjugate formation with target cells. May also regulate the activity of the neurotrophin receptors NTRK1, NTRK2 and NTRK3. This chain is SH2 domain-containing protein 1A (SH2D1A), found in Macaca mulatta (Rhesus macaque).